The following is a 464-amino-acid chain: 3-isopropylmalate dehydratase large subunit (464 aa).

Cysteine 337, cysteine 397, and cysteine 400 together coordinate [4Fe-4S] cluster.

The protein belongs to the aconitase/IPM isomerase family. LeuC type 1 subfamily. Heterodimer of LeuC and LeuD. The cofactor is [4Fe-4S] cluster.

It catalyses the reaction (2R,3S)-3-isopropylmalate = (2S)-2-isopropylmalate. It functions in the pathway amino-acid biosynthesis; L-leucine biosynthesis; L-leucine from 3-methyl-2-oxobutanoate: step 2/4. Its function is as follows. Catalyzes the isomerization between 2-isopropylmalate and 3-isopropylmalate, via the formation of 2-isopropylmaleate. This Bacillus cereus (strain ATCC 10987 / NRS 248) protein is 3-isopropylmalate dehydratase large subunit.